A 295-amino-acid chain; its full sequence is Ribosomal RNA small subunit methyltransferase A (295 aa).

The S-adenosyl-L-methionine site is built by Asn-40, Val-42, Gly-67, Glu-88, Asp-118, and Asn-135.

It belongs to the class I-like SAM-binding methyltransferase superfamily. rRNA adenine N(6)-methyltransferase family. RsmA subfamily.

It is found in the cytoplasm. The enzyme catalyses adenosine(1518)/adenosine(1519) in 16S rRNA + 4 S-adenosyl-L-methionine = N(6)-dimethyladenosine(1518)/N(6)-dimethyladenosine(1519) in 16S rRNA + 4 S-adenosyl-L-homocysteine + 4 H(+). Its function is as follows. Specifically dimethylates two adjacent adenosines (A1518 and A1519) in the loop of a conserved hairpin near the 3'-end of 16S rRNA in the 30S particle. May play a critical role in biogenesis of 30S subunits. The sequence is that of Ribosomal RNA small subunit methyltransferase A from Arthrobacter sp. (strain FB24).